We begin with the raw amino-acid sequence, 228 residues long: Lipoprotein-releasing system ATP-binding protein LolD (228 aa).

The region spanning 5 to 228 is the ABC transporter domain; that stretch reads FALSAISKSF…SGTLQNYTDY (224 aa). 40–47 contacts ATP; the sequence is GPSGSGKS.

It belongs to the ABC transporter superfamily. Lipoprotein translocase (TC 3.A.1.125) family. As to quaternary structure, the complex is composed of two ATP-binding proteins (LolD) and two transmembrane proteins (LolC and LolE).

The protein resides in the cell inner membrane. Its function is as follows. Part of the ABC transporter complex LolCDE involved in the translocation of mature outer membrane-directed lipoproteins, from the inner membrane to the periplasmic chaperone, LolA. Responsible for the formation of the LolA-lipoprotein complex in an ATP-dependent manner. In Ehrlichia ruminantium (strain Gardel), this protein is Lipoprotein-releasing system ATP-binding protein LolD.